The primary structure comprises 130 residues: Ribosome biogenesis inhibitor MINAS-60 (130 aa).

Residues 61-130 are disordered; the sequence is SRVRRIPTRP…RRRRPVTSSC (70 aa). The segment covering 109–130 has biased composition (basic residues); the sequence is KGRRRRRRRMRRRRRRPVTSSC.

As to quaternary structure, interacts with 60S ribosome assembly factors GTPBP4 and MRTO4.

It is found in the nucleus. The protein resides in the nucleolus. Functionally, acts as a late-stage inhibitor of pre-60S ribosome assembly by preventing pre-60S ribosome export from nucleus. The chain is Ribosome biogenesis inhibitor MINAS-60 from Homo sapiens (Human).